A 115-amino-acid polypeptide reads, in one-letter code: Large ribosomal subunit protein bL19 (115 aa).

Belongs to the bacterial ribosomal protein bL19 family. In terms of assembly, part of the 50S ribosomal subunit.

Functionally, this protein is located at the 30S-50S ribosomal subunit interface and may play a role in the structure and function of the aminoacyl-tRNA binding site. In Bacillus subtilis (strain 168), this protein is Large ribosomal subunit protein bL19 (rplS).